The primary structure comprises 291 residues: 4-hydroxy-tetrahydrodipicolinate synthase (291 aa).

Thr-45 serves as a coordination point for pyruvate. The active-site Proton donor/acceptor is the Tyr-131. Lys-159 functions as the Schiff-base intermediate with substrate in the catalytic mechanism. Ile-202 provides a ligand contact to pyruvate.

It belongs to the DapA family. Homotetramer; dimer of dimers.

Its subcellular location is the cytoplasm. It catalyses the reaction L-aspartate 4-semialdehyde + pyruvate = (2S,4S)-4-hydroxy-2,3,4,5-tetrahydrodipicolinate + H2O + H(+). The protein operates within amino-acid biosynthesis; L-lysine biosynthesis via DAP pathway; (S)-tetrahydrodipicolinate from L-aspartate: step 3/4. Catalyzes the condensation of (S)-aspartate-beta-semialdehyde [(S)-ASA] and pyruvate to 4-hydroxy-tetrahydrodipicolinate (HTPA). The sequence is that of 4-hydroxy-tetrahydrodipicolinate synthase from Methanosarcina barkeri (strain Fusaro / DSM 804).